A 212-amino-acid polypeptide reads, in one-letter code: FMN-dependent NADH:quinone oxidoreductase 1 (212 aa).

FMN is bound by residues serine 10, 16 to 18 (SHS), 97 to 100 (MYNF), and 145 to 148 (SRGG).

It belongs to the azoreductase type 1 family. Homodimer. FMN serves as cofactor.

It carries out the reaction 2 a quinone + NADH + H(+) = 2 a 1,4-benzosemiquinone + NAD(+). The catalysed reaction is N,N-dimethyl-1,4-phenylenediamine + anthranilate + 2 NAD(+) = 2-(4-dimethylaminophenyl)diazenylbenzoate + 2 NADH + 2 H(+). Its function is as follows. Quinone reductase that provides resistance to thiol-specific stress caused by electrophilic quinones. In terms of biological role, also exhibits azoreductase activity. Catalyzes the reductive cleavage of the azo bond in aromatic azo compounds to the corresponding amines. This Pseudomonas fluorescens (strain Pf0-1) protein is FMN-dependent NADH:quinone oxidoreductase 1.